The chain runs to 289 residues: tRNA acetyltransferase TAN1 (289 aa).

Over residues 1-10 (MGEKRNRNGK) the composition is skewed to basic and acidic residues. Disordered regions lie at residues 1-31 (MGEK…DPGT) and 64-83 (DIKE…LSIE). S72 carries the phosphoserine modification. Residues 146–259 (ADPKNMVKRT…KSNIGMCVVD (114 aa)) form the THUMP domain.

The protein localises to the cytoplasm. It is found in the nucleus. Functionally, probable tRNA acetyltransferase required for the formation of the modified nucleoside N(4)-acetylcytidine in serine and leucine tRNAs. Binds RNA. The chain is tRNA acetyltransferase TAN1 (TAN1) from Saccharomyces cerevisiae (strain ATCC 204508 / S288c) (Baker's yeast).